A 198-amino-acid chain; its full sequence is uncharacterized protein (198 aa).

In terms of domain architecture, PA14 spans 1-110; it reads MTGYFLPPQT…GTTVSDDFEG (110 aa).

Belongs to the flocculin family.

This is an uncharacterized protein from Saccharomyces cerevisiae (strain ATCC 204508 / S288c) (Baker's yeast).